We begin with the raw amino-acid sequence, 152 residues long: Small ribosomal subunit protein uS17A (152 aa).

The protein belongs to the universal ribosomal protein uS17 family. In terms of assembly, component of the small ribosomal subunit (SSU). Mature yeast ribosomes consist of a small (40S) and a large (60S) subunit. The 40S small subunit contains 1 molecule of ribosomal RNA (18S rRNA) and at least 33 different proteins. The large 60S subunit contains 3 rRNA molecules (25S, 5.8S and 5S rRNA) and at least 46 different proteins.

Its subcellular location is the cytoplasm. The protein resides in the nucleus. Functionally, component of the ribosome, a large ribonucleoprotein complex responsible for the synthesis of proteins in the cell. The small ribosomal subunit (SSU) binds messenger RNAs (mRNAs) and translates the encoded message by selecting cognate aminoacyl-transfer RNA (tRNA) molecules. The large subunit (LSU) contains the ribosomal catalytic site termed the peptidyl transferase center (PTC), which catalyzes the formation of peptide bonds, thereby polymerizing the amino acids delivered by tRNAs into a polypeptide chain. The nascent polypeptides leave the ribosome through a tunnel in the LSU and interact with protein factors that function in enzymatic processing, targeting, and the membrane insertion of nascent chains at the exit of the ribosomal tunnel. The protein is Small ribosomal subunit protein uS17A (rps1101) of Schizosaccharomyces pombe (strain 972 / ATCC 24843) (Fission yeast).